The sequence spans 483 residues: Type 2 glycosyltransferase (483 aa).

A helical transmembrane segment spans residues 21–41; the sequence is AVVYLSALFTPWFTAFCVLWL. Positions 156-158 match the Dxd motif motif; sequence DDD. The short motif at 301 to 305 is the QxxxRW motif element; sequence QCSRW. N-linked (GlcNAc...) asparagine glycosylation occurs at Asn-313. 3 helical membrane-spanning segments follow: residues 336-356, 369-389, and 396-416; these read IATFTSLAFVFDFLILAALWW, AIYAQLAFLAFSKVVKLVGLF, and IMFLPVSIIFGYFHGLIKIYA. Asn-421 carries N-linked (GlcNAc...) asparagine glycosylation.

It belongs to the GT2 glycosyltransferase family.

The protein localises to the cell membrane. Functionally, glycosyltransferase that plays an important role in infection-related morphogenesis and pathogenesis. Involved in stress tolerance and hyphal hydrophobicity via its regulation of the expression of nydrophobin MPG1. May regulate growth, pathogenicity, and cell wall integrity (CWI) through glycosylation of heat shock protein SSB1, and other (unidentified) substrates may contribute to conidiation. Candidate proteins as potential substrates of GT2 include several heat shock proteins (SSB1/MGG_02503, MGG_06759 and MGG_06958), two coiled-coil domain-containing proteins (MGG_04321 and MGG_09571), aminopeptidase 2 (MGG_16472), and a nuclease domain-containing protein (MGG_12646). In Pyricularia oryzae (strain 70-15 / ATCC MYA-4617 / FGSC 8958) (Rice blast fungus), this protein is Type 2 glycosyltransferase.